The primary structure comprises 572 residues: Phosphoenolpyruvate-protein phosphotransferase (572 aa).

The active-site Tele-phosphohistidine intermediate is the His-191. The phosphoenolpyruvate site is built by Arg-298 and Arg-334. The Mg(2+) site is built by Glu-433 and Asp-457. Phosphoenolpyruvate is bound by residues 456 to 457 (ND) and Arg-467. Cys-504 acts as the Proton donor in catalysis.

The protein belongs to the PEP-utilizing enzyme family. As to quaternary structure, homodimer. The cofactor is Mg(2+).

The protein resides in the cytoplasm. It catalyses the reaction L-histidyl-[protein] + phosphoenolpyruvate = N(pros)-phospho-L-histidyl-[protein] + pyruvate. In terms of biological role, general (non sugar-specific) component of the phosphoenolpyruvate-dependent sugar phosphotransferase system (sugar PTS). This major carbohydrate active-transport system catalyzes the phosphorylation of incoming sugar substrates concomitantly with their translocation across the cell membrane. Enzyme I transfers the phosphoryl group from phosphoenolpyruvate (PEP) to the phosphoryl carrier protein (HPr). In Staphylococcus aureus (strain MRSA252), this protein is Phosphoenolpyruvate-protein phosphotransferase (ptsI).